Here is a 280-residue protein sequence, read N- to C-terminus: Probable S-methyl-5'-thioinosine phosphorylase (280 aa).

Phosphate is bound by residues Thr8 and 50–51; that span reads RH. Met175 is a substrate binding site. Thr176 contributes to the phosphate binding site. Substrate is bound at residue 199–201; sequence NYA.

It belongs to the PNP/MTAP phosphorylase family. MTAP subfamily. Homotrimer.

It carries out the reaction S-methyl-5'-thioinosine + phosphate = 5-(methylsulfanyl)-alpha-D-ribose 1-phosphate + hypoxanthine. Its pathway is purine metabolism; purine nucleoside salvage. Its function is as follows. Catalyzes the reversible phosphorylation of S-methyl-5'-thioinosine (MTI) to hypoxanthine and 5-methylthioribose-1-phosphate. Involved in the breakdown of S-methyl-5'-thioadenosine (MTA), a major by-product of polyamine biosynthesis. Catabolism of (MTA) occurs via deamination to MTI and phosphorolysis to hypoxanthine. This is Probable S-methyl-5'-thioinosine phosphorylase from Methanothermobacter thermautotrophicus (strain ATCC 29096 / DSM 1053 / JCM 10044 / NBRC 100330 / Delta H) (Methanobacterium thermoautotrophicum).